Reading from the N-terminus, the 3902-residue chain is Hybrid PKS-NRPS synthetase pynA (3902 aa).

The segment at Met1 to Met25 is disordered. The Ketosynthase family 3 (KS3) domain maps to Ala29–Ala441. Residues Cys201, His324, and His362 each act as for beta-ketoacyl synthase activity in the active site. Positions Val555–Val868 are malonyl-CoA:ACP transacylase (MAT) domain. The active-site For malonyltransferase activity is the Ser647. Residues His945–Leu1080 form an N-terminal hotdog fold region. Residues His945–Lys1256 form a dehydratase (DH) domain region. In terms of domain architecture, PKS/mFAS DH spans His945–Asp1258. His977 serves as the catalytic Proton acceptor; for dehydratase activity. Residues Gln1100–Asp1258 form a C-terminal hotdog fold region. Asp1164 serves as the catalytic Proton donor; for dehydratase activity. The interval Gly1629–Leu1945 is enoyl reductase (ER) domain. The segment at Thr1971 to Ile2143 is ketoreductase (KR) domain. Residues Glu2251–Ile2328 enclose the Carrier 1 domain. Ser2288 is modified (O-(pantetheine 4'-phosphoryl)serine). Basic and acidic residues predominate over residues Lys2337–Glu2350. Residues Lys2337–Pro2364 form a disordered region. Positions Val2374 to Glu2816 are condensation (C) domain 7. Residues Ser2836–Ile3248 are adenylation (A) domain 8. Positions Gly3391 to Leu3467 constitute a Carrier 2 domain. O-(pantetheine 4'-phosphoryl)serine is present on Ser3427. The tract at residues Leu3515–Thr3774 is thioesterase (TE) domain.

The protein in the C-terminal section; belongs to the NRP synthetase family.

Its pathway is secondary metabolite biosynthesis. In terms of biological role, hybrid PKS-NRPS synthetase; part of the gene cluster that mediates the biosynthesis of pyranonigrins, a family of antioxidative compounds. The first step of pyranonigrins biosynthesis is performed by the hybrid PKS-NRPS synthetase that condenses 6 malonyl-CoA units to an acetyl starter unit, to form a 1,3,5-trioxotetradecane-6,8-dienyl-ACP. The enoyl reductase (ER) domain of pynA is likely to be functional during the first two rounds of polyketide chain extension, to generate the saturated C-C bonds of the alkyl side chain. PynA subsequently forms the amide bond between the acyl chain and L-serine. Although pynA has a terminal reductase domain, it appears to require the thioesterase pynI for the release of the straight-chain intermediate from pynA via the formation of a tetramic acid pyranonigrin J. The methyltransferase pynC then coverts pyranonigrin J to pyranonigrin I via N-methylation. The FAD-dependent monooxygenase pynG catalyzes an epoxidation-mediated cyclization to form the dihydro-gamma-pyrone moiety, followed by pynD-catalyzed oxidation of the alcohol to the ketone and enolization to yield the characteristic tetramic acid-fused gamma-pyrone core of pyranonigrin H. Pyranonigrin H is substrate of pynH for dehydration-mediated exo-methylene formation from the serine side chain to produce pyranonigrin E, before the oxidase pynE reduces the exo-methylene of pyranonigrin E into a pendant methyl to form pyranonigrin G. The FAD-linked oxidoreductase pynB performs the reverse reaction and converts pyranonigrin G back to pyranonigrin E. In Aspergillus niger (strain ATCC MYA-4892 / CBS 513.88 / FGSC A1513), this protein is Hybrid PKS-NRPS synthetase pynA.